Consider the following 384-residue polypeptide: MSQDFYEILGVSRDASEDEIQEAYREKAREYHPDVSDDPDAEEKFKQAKKAKEVLTDEEKRQMYDQMGHERFEQAEKRGGAGGGGGRGGMGGDPFGGGAGGFDMQDIFDQFFGGGGRGGRGGSRRRQGQDLQTRLEIDLEEAYNGATKQLNVTRPEACDDCDGAGHPPGADSETCPECNGQGQTTQVQQTPMGRVQQRTTCRRCDGEGTLYDETCSTCRGNGVVQNDASLEVEIPSGIADGQTLRMEREGAPGENGGPNGDLLIEVQVRDHPDFERDGDSLQHQQAISFPQAVFGDTITVPTLDGEVEVDVPSGTQSGEVFRLEGKGMPRLRRRGHGDLYVQVQVVTPDSLNAEQKEALEQFAEAGGEEVDVDEGFFEKLKNSL.

A J domain is found at 4–68 (DFYEILGVSR…EKRQMYDQMG (65 aa)). Disordered stretches follow at residues 29–60 (REYH…DEEK) and 73–131 (EQAE…GQDL). Basic and acidic residues predominate over residues 42–60 (EEKFKQAKKAKEVLTDEEK). The segment covering 80 to 101 (GAGGGGGRGGMGGDPFGGGAGG) has biased composition (gly residues). Positions 102–111 (FDMQDIFDQF) are enriched in low complexity. Residues 112–121 (FGGGGRGGRG) show a composition bias toward gly residues. The CR-type zinc finger occupies 145-227 (GATKQLNVTR…CRGNGVVQND (83 aa)). Zn(2+) is bound by residues cysteine 158, cysteine 161, cysteine 175, and cysteine 178. CXXCXGXG motif repeat units follow at residues 158–165 (CDDCDGAG), 175–182 (CPECNGQG), 201–208 (CRRCDGEG), and 215–222 (CSTCRGNG). The tract at residues 160–191 (DCDGAGHPPGADSETCPECNGQGQTTQVQQTP) is disordered. Over residues 180–190 (GQGQTTQVQQT) the composition is skewed to low complexity. Zn(2+) contacts are provided by cysteine 201, cysteine 204, cysteine 215, and cysteine 218.

It belongs to the DnaJ family. In terms of assembly, homodimer. Zn(2+) is required as a cofactor.

Its subcellular location is the cytoplasm. Its function is as follows. Participates actively in the response to hyperosmotic and heat shock by preventing the aggregation of stress-denatured proteins and by disaggregating proteins, also in an autonomous, DnaK-independent fashion. Unfolded proteins bind initially to DnaJ; upon interaction with the DnaJ-bound protein, DnaK hydrolyzes its bound ATP, resulting in the formation of a stable complex. GrpE releases ADP from DnaK; ATP binding to DnaK triggers the release of the substrate protein, thus completing the reaction cycle. Several rounds of ATP-dependent interactions between DnaJ, DnaK and GrpE are required for fully efficient folding. Also involved, together with DnaK and GrpE, in the DNA replication of plasmids through activation of initiation proteins. The polypeptide is Chaperone protein DnaJ (Haloarcula marismortui (strain ATCC 43049 / DSM 3752 / JCM 8966 / VKM B-1809) (Halobacterium marismortui)).